Reading from the N-terminus, the 225-residue chain is MAKDTTGRLHVTVKSGGKRKLSSKLWLERQLNDPYVAQAKRDGFRSRAAYKLREMDDKYHFLKQGQAVVDLGAAPGGWSQIAAKRVGAEAGRGKVIAIDLLEMGEIPGVTFAQLDFLSDDAPEKLRAMLGGGADIVMSDMAANTTGHRKTDQLRIVGLVESAAAFAAEVLNPGGTFLAKVFQSGADATLQAELKRNFATVRHVKPAASRQDSSERYVLAMGFRGG.

The S-adenosyl-L-methionine site is built by glycine 76, tryptophan 78, aspartate 99, aspartate 115, and aspartate 139. Lysine 179 functions as the Proton acceptor in the catalytic mechanism.

The protein belongs to the class I-like SAM-binding methyltransferase superfamily. RNA methyltransferase RlmE family.

Its subcellular location is the cytoplasm. The catalysed reaction is uridine(2552) in 23S rRNA + S-adenosyl-L-methionine = 2'-O-methyluridine(2552) in 23S rRNA + S-adenosyl-L-homocysteine + H(+). Its function is as follows. Specifically methylates the uridine in position 2552 of 23S rRNA at the 2'-O position of the ribose in the fully assembled 50S ribosomal subunit. The polypeptide is Ribosomal RNA large subunit methyltransferase E (Afipia carboxidovorans (strain ATCC 49405 / DSM 1227 / KCTC 32145 / OM5) (Oligotropha carboxidovorans)).